The primary structure comprises 396 residues: Vacuolar protease A (396 aa).

Residues 1–17 form the signal peptide; sequence MKGALLTAAMLLGSAQA. Positions 18-70 are cleaved as a propeptide — activation peptide; that stretch reads GVHTMKLKKVPLAEQLESVPIDVQVQHLGQKYTGLRTESHTQAMFKATDAQVS. One can recognise a Peptidase A1 domain in the interval 85 to 392; sequence YFSEITIGTP…DLGADTVGIA (308 aa). Residue aspartate 103 is part of the active site. Residues cysteine 116 and cysteine 121 are joined by a disulfide bond. Asparagine 138 carries N-linked (GlcNAc...) asparagine glycosylation. Residue aspartate 284 is part of the active site. Cysteine 318 and cysteine 351 form a disulfide bridge. Residue asparagine 335 is glycosylated (N-linked (GlcNAc...) asparagine).

This sequence belongs to the peptidase A1 family.

It is found in the vacuole. The sequence is that of Vacuolar protease A (pep-4) from Neurospora crassa (strain ATCC 24698 / 74-OR23-1A / CBS 708.71 / DSM 1257 / FGSC 987).